The following is a 151-amino-acid chain: SsrA-binding protein (151 aa).

This sequence belongs to the SmpB family.

It localises to the cytoplasm. In terms of biological role, required for rescue of stalled ribosomes mediated by trans-translation. Binds to transfer-messenger RNA (tmRNA), required for stable association of tmRNA with ribosomes. tmRNA and SmpB together mimic tRNA shape, replacing the anticodon stem-loop with SmpB. tmRNA is encoded by the ssrA gene; the 2 termini fold to resemble tRNA(Ala) and it encodes a 'tag peptide', a short internal open reading frame. During trans-translation Ala-aminoacylated tmRNA acts like a tRNA, entering the A-site of stalled ribosomes, displacing the stalled mRNA. The ribosome then switches to translate the ORF on the tmRNA; the nascent peptide is terminated with the 'tag peptide' encoded by the tmRNA and targeted for degradation. The ribosome is freed to recommence translation, which seems to be the essential function of trans-translation. The polypeptide is SsrA-binding protein (Geotalea uraniireducens (strain Rf4) (Geobacter uraniireducens)).